We begin with the raw amino-acid sequence, 231 residues long: Cytochrome c oxidase assembly factor 7 (231 aa).

Sel1-like repeat units lie at residues proline 34–glutamate 66, serine 68–glycine 104, isoleucine 108–phenylalanine 145, alanine 146–histidine 182, and methionine 183–arginine 218.

The protein belongs to the hcp beta-lactamase family.

Its subcellular location is the mitochondrion intermembrane space. Its function is as follows. May be required for assembly of mitochondrial respiratory chain complexes. The chain is Cytochrome c oxidase assembly factor 7 (coa7) from Xenopus tropicalis (Western clawed frog).